The primary structure comprises 343 residues: GTPase Obg (343 aa).

Positions 1-159 constitute an Obg domain; sequence MKFLDQAKVY…LNIWLRLKLI (159 aa). The OBG-type G domain maps to 160-327; the sequence is ADAGLVGLPN…VLRALMTVIA (168 aa). GTP contacts are provided by residues 166–173, 191–195, 212–215, 279–282, and 308–310; these read GLPNAGKS, FTTLH, DIPG, SQVD, and SAV. Mg(2+) contacts are provided by Ser173 and Thr193.

Belongs to the TRAFAC class OBG-HflX-like GTPase superfamily. OBG GTPase family. Monomer. Mg(2+) serves as cofactor.

The protein localises to the cytoplasm. In terms of biological role, an essential GTPase which binds GTP, GDP and possibly (p)ppGpp with moderate affinity, with high nucleotide exchange rates and a fairly low GTP hydrolysis rate. Plays a role in control of the cell cycle, stress response, ribosome biogenesis and in those bacteria that undergo differentiation, in morphogenesis control. The protein is GTPase Obg of Mesorhizobium japonicum (strain LMG 29417 / CECT 9101 / MAFF 303099) (Mesorhizobium loti (strain MAFF 303099)).